The chain runs to 117 residues: Putative pterin-4-alpha-carbinolamine dehydratase (117 aa).

Belongs to the pterin-4-alpha-carbinolamine dehydratase family.

The catalysed reaction is (4aS,6R)-4a-hydroxy-L-erythro-5,6,7,8-tetrahydrobiopterin = (6R)-L-erythro-6,7-dihydrobiopterin + H2O. This is Putative pterin-4-alpha-carbinolamine dehydratase from Azoarcus sp. (strain BH72).